A 247-amino-acid chain; its full sequence is Probable transcriptional regulatory protein LBF_0056 (247 aa).

This sequence belongs to the TACO1 family.

It is found in the cytoplasm. The polypeptide is Probable transcriptional regulatory protein LBF_0056 (Leptospira biflexa serovar Patoc (strain Patoc 1 / Ames)).